A 302-amino-acid chain; its full sequence is GTPase Era (302 aa).

Residues 8–175 (HSGFVAIIGR…LTTLKGQLPE (168 aa)) form the Era-type G domain. A G1 region spans residues 16–23 (GRPNVGKS). 16–23 (GRPNVGKS) contacts GTP. Positions 42–46 (QTTRN) are G2. The tract at residues 63-66 (DTPG) is G3. Residues 63-67 (DTPGI) and 125-128 (NKID) contribute to the GTP site. Positions 125 to 128 (NKID) are G4. The G5 stretch occupies residues 154-156 (ISA). The KH type-2 domain occupies 206–283 (TRQEVPHSTA…YLELWVKVQE (78 aa)).

It belongs to the TRAFAC class TrmE-Era-EngA-EngB-Septin-like GTPase superfamily. Era GTPase family. In terms of assembly, monomer.

Its subcellular location is the cytoplasm. It is found in the cell membrane. In terms of biological role, an essential GTPase that binds both GDP and GTP, with rapid nucleotide exchange. Plays a role in 16S rRNA processing and 30S ribosomal subunit biogenesis and possibly also in cell cycle regulation and energy metabolism. The protein is GTPase Era of Lactiplantibacillus plantarum (strain ATCC BAA-793 / NCIMB 8826 / WCFS1) (Lactobacillus plantarum).